A 943-amino-acid polypeptide reads, in one-letter code: Isoleucine--tRNA ligase (943 aa).

The short motif at P59–H69 is the 'HIGH' region element. An L-isoleucyl-5'-AMP-binding site is contributed by E577. The 'KMSKS' region signature appears at K618–S622. Position 621 (K621) interacts with ATP. Zn(2+)-binding residues include C906, C909, C926, and C929.

This sequence belongs to the class-I aminoacyl-tRNA synthetase family. IleS type 1 subfamily. As to quaternary structure, monomer. Zn(2+) serves as cofactor.

The protein localises to the cytoplasm. It catalyses the reaction tRNA(Ile) + L-isoleucine + ATP = L-isoleucyl-tRNA(Ile) + AMP + diphosphate. Catalyzes the attachment of isoleucine to tRNA(Ile). As IleRS can inadvertently accommodate and process structurally similar amino acids such as valine, to avoid such errors it has two additional distinct tRNA(Ile)-dependent editing activities. One activity is designated as 'pretransfer' editing and involves the hydrolysis of activated Val-AMP. The other activity is designated 'posttransfer' editing and involves deacylation of mischarged Val-tRNA(Ile). This Stenotrophomonas maltophilia (strain K279a) protein is Isoleucine--tRNA ligase.